A 103-amino-acid chain; its full sequence is Large ribosomal subunit protein uL23c (103 aa).

The protein belongs to the universal ribosomal protein uL23 family. In terms of assembly, part of the 50S ribosomal subunit.

The protein resides in the plastid. The protein localises to the chloroplast. Binds to 23S rRNA. The polypeptide is Large ribosomal subunit protein uL23c (rpl23) (Gracilaria tenuistipitata var. liui (Red alga)).